The following is a 108-amino-acid chain: Glutaredoxin-1 (108 aa).

In terms of domain architecture, Glutaredoxin spans 3–106; the sequence is EEFVQQRLAN…DILSSIGVLR (104 aa). Cys-23 and Cys-26 are oxidised to a cystine.

It belongs to the glutaredoxin family.

The protein localises to the virion. In terms of biological role, has thioltransferase and dehydroascorbate reductase activities. This Camelpox virus (strain M-96) protein is Glutaredoxin-1 (OPG075).